The primary structure comprises 33 residues: Unknown 31.6 kDa protein from 2D-PAGE (33 aa).

The sequence is that of Unknown 31.6 kDa protein from 2D-PAGE from Onion yellows phytoplasma.